The following is a 375-amino-acid chain: 5-amino-6-(D-ribitylamino)uracil--L-tyrosine 4-hydroxyphenyl transferase 1 (375 aa).

One can recognise a Radical SAM core domain in the interval 50–284 (VTYVVNRNIN…AVSRILFHGH (235 aa)). 3 residues coordinate [4Fe-4S] cluster: cysteine 64, cysteine 68, and cysteine 71.

It belongs to the radical SAM superfamily. CofH family. In terms of assembly, consists of two subunits, CofG and CofH. [4Fe-4S] cluster serves as cofactor.

It catalyses the reaction 5-amino-6-(D-ribitylamino)uracil + L-tyrosine + S-adenosyl-L-methionine = 5-amino-5-(4-hydroxybenzyl)-6-(D-ribitylimino)-5,6-dihydrouracil + 2-iminoacetate + 5'-deoxyadenosine + L-methionine + H(+). It participates in cofactor biosynthesis; coenzyme F0 biosynthesis. Its function is as follows. Catalyzes the radical-mediated synthesis of 5-amino-5-(4-hydroxybenzyl)-6-(D-ribitylimino)-5,6-dihydrouracil from 5-amino-6-(D-ribitylamino)uracil and L-tyrosine. In Methanosarcina acetivorans (strain ATCC 35395 / DSM 2834 / JCM 12185 / C2A), this protein is 5-amino-6-(D-ribitylamino)uracil--L-tyrosine 4-hydroxyphenyl transferase 1.